The sequence spans 110 residues: Competence pilus inhibition repressor (110 aa).

Residues 7–61 (VRFLRKRQGWTQQQLADFSHTSKSNISNLENGNQGYSPAILEYLAKAFNCSVSQI) enclose the HTH cro/C1-type domain. Residues 18-37 (QQQLADFSHTSKSNISNLEN) constitute a DNA-binding region (H-T-H motif).

Functionally, represses transcription of the PilB-specific inhibitory protein CpiA. In Acinetobacter baylyi (strain ATCC 33305 / BD413 / ADP1), this protein is Competence pilus inhibition repressor.